Reading from the N-terminus, the 150-residue chain is FAD synthase (150 aa).

Residues 11–12 (TF), 16–19 (HPGH), aspartate 96, and tyrosine 124 each bind ATP.

The protein belongs to the archaeal FAD synthase family. In terms of assembly, homodimer. The cofactor is a divalent metal cation.

The catalysed reaction is FMN + ATP + H(+) = FAD + diphosphate. Its pathway is cofactor biosynthesis; FAD biosynthesis; FAD from FMN: step 1/1. Functionally, catalyzes the transfer of the AMP portion of ATP to flavin mononucleotide (FMN) to produce flavin adenine dinucleotide (FAD) coenzyme. The protein is FAD synthase of Methanocaldococcus fervens (strain DSM 4213 / JCM 15782 / AG86) (Methanococcus fervens).